The primary structure comprises 273 residues: Putative phosphoenolpyruvate synthase regulatory protein (273 aa).

153–160 is an ADP binding site; sequence AVSRAGKT.

The protein belongs to the pyruvate, phosphate/water dikinase regulatory protein family. PSRP subfamily.

The enzyme catalyses [pyruvate, water dikinase] + ADP = [pyruvate, water dikinase]-phosphate + AMP + H(+). It carries out the reaction [pyruvate, water dikinase]-phosphate + phosphate + H(+) = [pyruvate, water dikinase] + diphosphate. Bifunctional serine/threonine kinase and phosphorylase involved in the regulation of the phosphoenolpyruvate synthase (PEPS) by catalyzing its phosphorylation/dephosphorylation. In Stenotrophomonas maltophilia (strain R551-3), this protein is Putative phosphoenolpyruvate synthase regulatory protein.